Here is a 226-residue protein sequence, read N- to C-terminus: 7-cyano-7-deazaguanine synthase (226 aa).

9–19 (YSGGLDSTTCL) is an ATP binding site. 4 residues coordinate Zn(2+): C189, C199, C202, and C205.

It belongs to the QueC family. Zn(2+) serves as cofactor.

It carries out the reaction 7-carboxy-7-deazaguanine + NH4(+) + ATP = 7-cyano-7-deazaguanine + ADP + phosphate + H2O + H(+). The protein operates within purine metabolism; 7-cyano-7-deazaguanine biosynthesis. Its function is as follows. Catalyzes the ATP-dependent conversion of 7-carboxy-7-deazaguanine (CDG) to 7-cyano-7-deazaguanine (preQ(0)). In Pelobacter propionicus (strain DSM 2379 / NBRC 103807 / OttBd1), this protein is 7-cyano-7-deazaguanine synthase.